We begin with the raw amino-acid sequence, 197 residues long: Recombination protein RecR (197 aa).

A C4-type zinc finger spans residues 55–70 (CVQCRDFTESEICTIC). Residues 78–173 (QQLCVVESPA…RPSRLAQGMP (96 aa)) enclose the Toprim domain.

It belongs to the RecR family.

Functionally, may play a role in DNA repair. It seems to be involved in an RecBC-independent recombinational process of DNA repair. It may act with RecF and RecO. The polypeptide is Recombination protein RecR (Xanthomonas axonopodis pv. citri (strain 306)).